We begin with the raw amino-acid sequence, 270 residues long: Acetylglutamate kinase (270 aa).

Substrate-binding positions include 53 to 54, R75, and N167; that span reads GG.

It belongs to the acetylglutamate kinase family. ArgB subfamily.

It is found in the cytoplasm. The catalysed reaction is N-acetyl-L-glutamate + ATP = N-acetyl-L-glutamyl 5-phosphate + ADP. It functions in the pathway amino-acid biosynthesis; L-arginine biosynthesis; N(2)-acetyl-L-ornithine from L-glutamate: step 2/4. In terms of biological role, catalyzes the ATP-dependent phosphorylation of N-acetyl-L-glutamate. In Shewanella halifaxensis (strain HAW-EB4), this protein is Acetylglutamate kinase.